Reading from the N-terminus, the 130-residue chain is UPF0713 protein YngL (130 aa).

3 consecutive transmembrane segments (helical) span residues 4 to 25, 62 to 84, and 89 to 111; these read LSFL…LIVF, MLNC…YLFL, and IPLI…VGVG.

It belongs to the UPF0713 family.

It localises to the cell membrane. The protein is UPF0713 protein YngL (yngL) of Bacillus subtilis (strain 168).